Reading from the N-terminus, the 145-residue chain is Ribonuclease H (145 aa).

The RNase H type-1 domain maps to 1-142 (MKEVVIYTDG…CDEIARSMIK (142 aa)). Mg(2+) is bound by residues aspartate 9, glutamate 47, aspartate 69, and aspartate 134.

It belongs to the RNase H family. In terms of assembly, monomer. It depends on Mg(2+) as a cofactor.

It localises to the cytoplasm. It catalyses the reaction Endonucleolytic cleavage to 5'-phosphomonoester.. Endonuclease that specifically degrades the RNA of RNA-DNA hybrids. The protein is Ribonuclease H of Caldicellulosiruptor saccharolyticus (strain ATCC 43494 / DSM 8903 / Tp8T 6331).